Reading from the N-terminus, the 613-residue chain is Chaperone protein dnaK (613 aa).

Belongs to the heat shock protein 70 family.

It localises to the plastid. It is found in the chloroplast. Acts as a chaperone. This is Chaperone protein dnaK from Phaeodactylum tricornutum (strain CCAP 1055/1).